A 31-amino-acid polypeptide reads, in one-letter code: Sarcolipin (31 aa).

Residues 1–7 are Cytoplasmic-facing; sequence MGINTRE. The helical transmembrane segment at 8-26 threads the bilayer; that stretch reads LFLNFTIVLITVILMWLLV. Residues 27 to 31 lie on the Lumenal side of the membrane; it reads RSYQY.

This sequence belongs to the sarcolipin family. As to quaternary structure, homooligomer. Can also form heterooligomers with other sarcoplasmic/endoplasmic reticulum calcium ATPase (SERCA) regulators ARLN, ERLN, PLN and STRIT1/DWORF. Monomer. Interacts with calcium ATPase ATP2A1/SERCA1. Interacts as a monomer with ATP2A2/SERCA2; the interaction decreases ATP2A2 Ca(2+) affinity. Interacts with VMP1; VMP1 competes with PLN and SLN to prevent them from forming an inhibitory complex with ATP2A2.

It localises to the sarcoplasmic reticulum membrane. Its subcellular location is the endoplasmic reticulum membrane. Functionally, reversibly inhibits the activity of ATP2A1/SERCA1 and ATP2A2/SERCA2 in sarcoplasmic reticulum by decreasing the apparent affinity of the ATPase for Ca(2+). Also inhibits the activity of ATP2A3/SERCA3. Modulates calcium re-uptake during muscle relaxation and plays an important role in calcium homeostasis in muscle. Required for muscle-based, non-shivering thermogenesis. The polypeptide is Sarcolipin (Homo sapiens (Human)).